The following is a 340-amino-acid chain: GPALPP motifs-containing protein 1 (340 aa).

The interval 1–304 is disordered; that stretch reads MARDLIGPAL…PQERIPFDRD (304 aa). An N-acetylalanine modification is found at Ala-2. The short motif at 7 to 12 is the GPALPP motif 1 element; that stretch reads GPALPP. A Phosphoserine modification is found at Ser-28. A GPALPP motif 2 motif is present at residues 32 to 37; the sequence is GPALPP. A compositionally biased stretch (acidic residues) spans 60 to 69; sequence GNQESEEDDS. Residues 92–97 carry the GPALPP motif 3 motif; sequence GPALPP. The residue at position 105 (Ser-105) is a Phosphoserine. Pro residues predominate over residues 107-116; that stretch reads PRPIIGPALP. The short motif at 112–117 is the GPALPP motif 4 element; sequence GPALPP. Basic and acidic residues predominate over residues 124 to 133; sequence QKSDKGRDDP. Residue Thr-138 is modified to Phosphothreonine. Phosphoserine is present on residues Ser-140 and Ser-141. Basic and acidic residues-rich tracts occupy residues 163–187, 227–261, 269–279, and 287–304; these read EFEK…KPIV, PADR…KRLA, ESKRSESLMDI, and KAAE…FDRD. Lys-271 participates in a covalent cross-link: Glycyl lysine isopeptide (Lys-Gly) (interchain with G-Cter in SUMO2). Lys-308 participates in a covalent cross-link: Glycyl lysine isopeptide (Lys-Gly) (interchain with G-Cter in SUMO2).

The protein is GPALPP motifs-containing protein 1 (GPALPP1) of Homo sapiens (Human).